Reading from the N-terminus, the 463-residue chain is tRNA-splicing endonuclease subunit Sen2 (463 aa).

Ser32 and Ser147 each carry phosphoserine. Residues 120–213 (HDESTVQKIL…VASPSSLNGH (94 aa)) form a disordered region. Basic and acidic residues-rich tracts occupy residues 139–149 (PYRERKGESPQ) and 159–170 (SSLEGREGKDEL). Residues Tyr367 and His375 contribute to the active site. 3 positions are modified to phosphoserine: Ser406, Ser409, and Ser413. The active site involves Lys414.

The protein belongs to the tRNA-intron endonuclease family. As to quaternary structure, tRNA splicing endonuclease is a heterotetramer composed of TSEN2, TSEN15, TSEN34/LENG5 and TSEN54. tRNA splicing endonuclease complex also contains proteins of the pre-mRNA 3'-end processing machinery such as CLP1, CPSF1, CPSF4 and CSTF2.

It localises to the nucleus. The protein resides in the nucleolus. It carries out the reaction pretRNA = a 3'-half-tRNA molecule with a 5'-OH end + a 5'-half-tRNA molecule with a 2',3'-cyclic phosphate end + an intron with a 2',3'-cyclic phosphate and a 5'-hydroxyl terminus.. Its function is as follows. Constitutes one of the two catalytic subunit of the tRNA-splicing endonuclease complex, a complex responsible for identification and cleavage of the splice sites in pre-tRNA. It cleaves pre-tRNA at the 5'- and 3'-splice sites to release the intron. The products are an intron and two tRNA half-molecules bearing 2',3'-cyclic phosphate and 5'-OH termini. There are no conserved sequences at the splice sites, but the intron is invariably located at the same site in the gene, placing the splice sites an invariant distance from the constant structural features of the tRNA body. Probably carries the active site for 5'-splice site cleavage. The tRNA splicing endonuclease is also involved in mRNA processing via its association with pre-mRNA 3'-end processing factors, establishing a link between pre-tRNA splicing and pre-mRNA 3'-end formation, suggesting that the endonuclease subunits function in multiple RNA-processing events. This Rattus norvegicus (Rat) protein is tRNA-splicing endonuclease subunit Sen2 (Tsen2).